We begin with the raw amino-acid sequence, 168 residues long: Chorismate pyruvate-lyase (168 aa).

Substrate-binding residues include Met-36, Arg-78, Leu-116, and Glu-157.

It belongs to the UbiC family. As to quaternary structure, monomer.

It is found in the cytoplasm. The catalysed reaction is chorismate = 4-hydroxybenzoate + pyruvate. Its pathway is cofactor biosynthesis; ubiquinone biosynthesis. Removes the pyruvyl group from chorismate, with concomitant aromatization of the ring, to provide 4-hydroxybenzoate (4HB) for the ubiquinone pathway. This Yersinia enterocolitica serotype O:8 / biotype 1B (strain NCTC 13174 / 8081) protein is Chorismate pyruvate-lyase.